We begin with the raw amino-acid sequence, 352 residues long: Uroporphyrinogen decarboxylase (352 aa).

Residues 26–30 (RQAGR), Asp-76, Tyr-153, Ser-208, and His-323 contribute to the substrate site.

Belongs to the uroporphyrinogen decarboxylase family. As to quaternary structure, homodimer.

The protein localises to the cytoplasm. It carries out the reaction uroporphyrinogen III + 4 H(+) = coproporphyrinogen III + 4 CO2. It participates in porphyrin-containing compound metabolism; protoporphyrin-IX biosynthesis; coproporphyrinogen-III from 5-aminolevulinate: step 4/4. Functionally, catalyzes the decarboxylation of four acetate groups of uroporphyrinogen-III to yield coproporphyrinogen-III. The protein is Uroporphyrinogen decarboxylase of Prochlorococcus marinus (strain NATL1A).